The chain runs to 279 residues: Undecaprenyl-diphosphatase (279 aa).

Helical transmembrane passes span 45 to 65 (FVEMFNIVIQLGAIMAVIVIY), 85 to 105 (WQLWLKVVIACIPSILIALPF), 113 to 133 (FNFMIPIAIALIFYGFVFIWV), 188 to 208 (SVAADFTFFLAIPTMFGYSGL), 226 to 246 (LILLVASLTAFVVSLYVIRFL), and 255 to 275 (FTIFGKYRIVLGSLLILYWLV).

This sequence belongs to the UppP family.

It localises to the cell membrane. It carries out the reaction di-trans,octa-cis-undecaprenyl diphosphate + H2O = di-trans,octa-cis-undecaprenyl phosphate + phosphate + H(+). Catalyzes the dephosphorylation of undecaprenyl diphosphate (UPP). Confers resistance to bacitracin. This Streptococcus agalactiae serotype III (strain NEM316) protein is Undecaprenyl-diphosphatase.